The following is a 684-amino-acid chain: G-protein-signaling modulator 2 (684 aa).

An important for interaction with NUMA1; INSC and FRMPD1 region spans residues 22–357; the sequence is ASCLELALEG…HLEISREVGD (336 aa). TPR repeat units follow at residues 24-57, 62-95, 102-135, 142-184, 202-235, 242-275, 282-315, and 322-355; these read CLELALEGERLCKSGDCRAGVSFFEAAVQVGTED, SAIYSQLGNAYFYLHDYAKALEYHHHDLTLARTI, AKASGNLGNTLKVLGNFDEAIVCCQRHLDISREL, ARAL…AVDF, GRAFGNLGNTHYLLGNFRDAVIAHEQRLLIAKEF, RRAYSNLGNAYIFLGEFETASEYYKKTLLLARQL, AQSCYSLGNTYTLLQDYEKAIDYHLKHLAIAQEL, and GRACWSLGNAYTALGNHDQAMHFAEKHLEISREV. Position 132 is a phosphoserine; by PKG (S132). At S352 the chain carries Phosphoserine; by PKG. Phosphoserine is present on residues S408 and S483. Phosphothreonine is present on T486. One can recognise a GoLoco 1 domain in the interval 489 to 511; the sequence is DEGFFDLLSRFQSNRMDDQRCCL. At S501 the chain carries Phosphoserine; by PKC. S541 and S565 each carry phosphoserine. 3 consecutive GoLoco domains span residues 544–566, 594–616, and 628–650; these read TDEFLDLLASSQSRRLDDQRASF, DEDFFDILVKCQGSRLDDQRCAP, and DEDFFSLILRSQGKRMDEQRVLL. The residue at position 607 (S607) is a Phosphoserine; by PKG. GDP-binding residues include R608, R613, R642, and R647.

It belongs to the GPSM family. Interacts with the dynein-dynactin complex; this interaction is inhibited in a PLK1-dependent manner. Part of a spindle orientation complex at least composed of GNAI1, GPSM2 and NUMA1. Interacts with LLGL2. Interacts (via TPR repeat region) with INSC/inscuteable. Interacts (via TPR repeat region) with NUMA1 (via C-terminus); this interaction is direct, inhibited in a PLK1-dependent manner, prevents the binding of NUMA1 with SPAG5 and promotes spindle pole organization. INSC and NUMA1 compete for the same binding site, but INSC has higher affinity and can displace NUMA1 (in vitro). Interacts with GNAI2. Interacts (via GoLoco domains) with the GDP-bound form of GNAI1 and GNAI3; has much lower affinity for the GTP-bound form. Interaction with GDP-bound GNAI3 strongly enhances the affinity for NUMA1. Interacts (via TPR repeat region) with FRMPD1. INSC and FRMPD1 compete for the same binding site, but INSC has higher affinity and can displace FRMPD1 (in vitro). Interacts (via TPR repeat region) with FRMPD4. Identified in a complex with INSC and F2RL2/Par3. Interacts with TASOR. In terms of tissue distribution, ubiquitously expressed.

It localises to the cytoplasm. The protein resides in the cell cortex. Its subcellular location is the cytoskeleton. It is found in the spindle pole. The protein localises to the lateral cell membrane. Its function is as follows. Plays an important role in mitotic spindle pole organization via its interaction with NUMA1. Required for cortical dynein-dynactin complex recruitment during metaphase. Plays a role in metaphase spindle orientation. Also plays an important role in asymmetric cell divisions. Has guanine nucleotide dissociation inhibitor (GDI) activity towards G(i) alpha proteins, such as GNAI1 and GNAI3, and thereby regulates their activity. The chain is G-protein-signaling modulator 2 (GPSM2) from Homo sapiens (Human).